Reading from the N-terminus, the 852-residue chain is DNA mismatch repair protein MutS (852 aa).

Residue 602–609 (GPNMSGKS) coordinates ATP.

Belongs to the DNA mismatch repair MutS family.

This protein is involved in the repair of mismatches in DNA. It is possible that it carries out the mismatch recognition step. This protein has a weak ATPase activity. This chain is DNA mismatch repair protein MutS, found in Streptococcus thermophilus (strain CNRZ 1066).